The chain runs to 117 residues: Small ribosomal subunit protein bS6 (117 aa).

The disordered stretch occupies residues 96–117 (HAEGPSVQMQKRDERDSRRERR). Residues 105–117 (QKRDERDSRRERR) show a composition bias toward basic and acidic residues.

This sequence belongs to the bacterial ribosomal protein bS6 family.

Binds together with bS18 to 16S ribosomal RNA. The protein is Small ribosomal subunit protein bS6 of Ruegeria pomeroyi (strain ATCC 700808 / DSM 15171 / DSS-3) (Silicibacter pomeroyi).